Here is a 244-residue protein sequence, read N- to C-terminus: Phosphoadenosine 5'-phosphosulfate reductase (244 aa).

Catalysis depends on Cys239, which acts as the Nucleophile; cysteine thiosulfonate intermediate.

Belongs to the PAPS reductase family. CysH subfamily.

It localises to the cytoplasm. The catalysed reaction is [thioredoxin]-disulfide + sulfite + adenosine 3',5'-bisphosphate + 2 H(+) = [thioredoxin]-dithiol + 3'-phosphoadenylyl sulfate. It participates in sulfur metabolism; hydrogen sulfide biosynthesis; sulfite from sulfate: step 3/3. In terms of biological role, catalyzes the formation of sulfite from phosphoadenosine 5'-phosphosulfate (PAPS) using thioredoxin as an electron donor. The chain is Phosphoadenosine 5'-phosphosulfate reductase from Shigella flexneri.